The following is a 219-amino-acid chain: Histone H1.4 (219 aa).

The span at 1-15 shows a compositional bias: low complexity; it reads MSETAPAAPAAPAPA. A disordered region spans residues 1–41; that stretch reads MSETAPAAPAAPAPAEKTPVKKKARKSAGAAKRKASGPPVS. Position 2 is an N-acetylserine (S2). At S2 the chain carries Phosphoserine. K17 carries the post-translational modification N6-acetyllysine. T18 is subject to Phosphothreonine. Positions 20 to 35 are enriched in basic residues; sequence VKKKARKSAGAAKRKA. K26 carries the N6-acetyllysine; alternate modification. K26 is modified (N6-methyllysine; alternate). K34 carries the post-translational modification N6-(beta-hydroxybutyryl)lysine; alternate. K34 is subject to N6-succinyllysine; alternate. S36 carries the phosphoserine modification. The H15 domain occupies 36 to 109; that stretch reads SGPPVSELIT…GASGSFKLNK (74 aa). N6-(beta-hydroxybutyryl)lysine is present on K52. A Citrulline modification is found at R54. An N6-(beta-hydroxybutyryl)lysine mark is found at K64, K85, K90, and K106. A disordered region spans residues 91–219; it reads GTLVQTKGTG…KPKKAPAKKK (129 aa). The segment covering 119–140 has biased composition (basic residues); it reads KPKKAGAAKPKKPAGAAKKPKK. Position 146 is a phosphothreonine (T146). Composition is skewed to basic residues over residues 149–160 and 168–185; these read KGAKKTPKKAKK and KKAKSPKKAKAAKPKKAP. S187 bears the Phosphoserine mark. The span at 192-219 shows a compositional bias: basic residues; that stretch reads KAVKPKAAKPKAAKPKTAKPKKAPAKKK.

This sequence belongs to the histone H1/H5 family. Post-translationally, H1 histones are progressively phosphorylated during the cell cycle, becoming maximally phosphorylated during late G2 phase and M phase, and being dephosphorylated sharply thereafter. Acetylated at Lys-26. Deacetylated at Lys-26 by SIRT1. In terms of processing, citrullination at Arg-54 (H1R54ci) by PADI4 takes place within the DNA-binding site of H1 and results in its displacement from chromatin and global chromatin decondensation, thereby promoting pluripotency and stem cell maintenance.

The protein localises to the nucleus. The protein resides in the chromosome. Its function is as follows. Histone H1 protein binds to linker DNA between nucleosomes forming the macromolecular structure known as the chromatin fiber. Histones H1 are necessary for the condensation of nucleosome chains into higher-order structured fibers. Also acts as a regulator of individual gene transcription through chromatin remodeling, nucleosome spacing and DNA methylation. The sequence is that of Histone H1.4 from Oryctolagus cuniculus (Rabbit).